Reading from the N-terminus, the 356-residue chain is Serpentine receptor class epsilon-29 (356 aa).

Helical transmembrane passes span 29 to 49, 61 to 81, 119 to 139, 161 to 181, 190 to 210, 251 to 271, and 281 to 301; these read IVEL…IYII, ILAI…LITI, LLIF…FGVL, LFIP…TSLA, FLAQ…YFFV, LVFV…ALFY, and FVEN…IFSV.

It belongs to the nematode receptor-like protein sre family.

The protein resides in the membrane. The protein is Serpentine receptor class epsilon-29 (sre-29) of Caenorhabditis elegans.